Reading from the N-terminus, the 482-residue chain is Retinoic acid receptor beta (482 aa).

Residues 1–114 (MSTSSHACPV…PLPPPRVYKP (114 aa)) are modulating. Ser104 bears the Phosphoserine mark. 2 NR C4-type zinc fingers span residues 115-135 (CFVC…CEGC) and 151-175 (CHRD…LQKC). Residues 115 to 180 (CFVCQDKSSG…RLQKCFEVGM (66 aa)) constitute a DNA-binding region (nuclear receptor). A hinge region spans residues 181–209 (SKESVRNDRNKKKKEPSKQECTESYEMTA). The region spanning 210 to 444 (ELDDLTEKIR…PLIQEMLENS (235 aa)) is the NR LBD domain. A disordered region spans residues 443–482 (NSEGHEPLTPSSSGNIAEHSPSVSPSSVENSGVSQSPLLQ). The span at 462–482 (SPSVSPSSVENSGVSQSPLLQ) shows a compositional bias: low complexity.

The protein belongs to the nuclear hormone receptor family. NR1 subfamily. Homodimer. Heterodimer; with a RXR molecule. Binds DNA preferentially as a RAR/RXR heterodimer. Heterodimerizes (via NR LBD) with RXRA. Interacts weakly with NCOR2.

The protein localises to the nucleus. It is found in the cytoplasm. In terms of biological role, receptor for retinoic acid. Retinoic acid receptors bind as heterodimers to their target response elements in response to their ligands, all-trans or 9-cis retinoic acid, and regulate gene expression in various biological processes. The RAR/RXR heterodimers bind to the retinoic acid response elements (RARE) composed of tandem 5'-AGGTCA-3' sites known as DR1-DR5. In the absence of ligand, acts mainly as an activator of gene expression due to weak binding to corepressors. The RXRA/RARB heterodimer can act as a repressor on the DR1 element and as an activator on the DR5 element. In concert with RARG, required for skeletal growth, matrix homeostasis and growth plate function. The protein is Retinoic acid receptor beta (Rarb) of Mus musculus (Mouse).